We begin with the raw amino-acid sequence, 244 residues long: NAD(P)H-quinone oxidoreductase subunit K (244 aa).

Positions 60, 61, 125, and 156 each coordinate [4Fe-4S] cluster.

Belongs to the complex I 20 kDa subunit family. As to quaternary structure, NDH-1 can be composed of about 15 different subunits; different subcomplexes with different compositions have been identified which probably have different functions. The cofactor is [4Fe-4S] cluster.

The protein localises to the cellular thylakoid membrane. It carries out the reaction a plastoquinone + NADH + (n+1) H(+)(in) = a plastoquinol + NAD(+) + n H(+)(out). It catalyses the reaction a plastoquinone + NADPH + (n+1) H(+)(in) = a plastoquinol + NADP(+) + n H(+)(out). Its function is as follows. NDH-1 shuttles electrons from an unknown electron donor, via FMN and iron-sulfur (Fe-S) centers, to quinones in the respiratory and/or the photosynthetic chain. The immediate electron acceptor for the enzyme in this species is believed to be plastoquinone. Couples the redox reaction to proton translocation, and thus conserves the redox energy in a proton gradient. Cyanobacterial NDH-1 also plays a role in inorganic carbon-concentration. The protein is NAD(P)H-quinone oxidoreductase subunit K of Prochlorococcus marinus (strain AS9601).